The sequence spans 223 residues: Phosphoribosylformylglycinamidine synthase subunit PurQ (223 aa).

The 222-residue stretch at 2–223 folds into the Glutamine amidotransferase type-1 domain; that stretch reads KVAIIRFPGT…LLENFINFNF (222 aa). Residue Cys84 is the Nucleophile of the active site. Catalysis depends on residues His192 and Glu194.

In terms of assembly, part of the FGAM synthase complex composed of 1 PurL, 1 PurQ and 2 PurS subunits.

Its subcellular location is the cytoplasm. The catalysed reaction is N(2)-formyl-N(1)-(5-phospho-beta-D-ribosyl)glycinamide + L-glutamine + ATP + H2O = 2-formamido-N(1)-(5-O-phospho-beta-D-ribosyl)acetamidine + L-glutamate + ADP + phosphate + H(+). It catalyses the reaction L-glutamine + H2O = L-glutamate + NH4(+). The protein operates within purine metabolism; IMP biosynthesis via de novo pathway; 5-amino-1-(5-phospho-D-ribosyl)imidazole from N(2)-formyl-N(1)-(5-phospho-D-ribosyl)glycinamide: step 1/2. Part of the phosphoribosylformylglycinamidine synthase complex involved in the purines biosynthetic pathway. Catalyzes the ATP-dependent conversion of formylglycinamide ribonucleotide (FGAR) and glutamine to yield formylglycinamidine ribonucleotide (FGAM) and glutamate. The FGAM synthase complex is composed of three subunits. PurQ produces an ammonia molecule by converting glutamine to glutamate. PurL transfers the ammonia molecule to FGAR to form FGAM in an ATP-dependent manner. PurS interacts with PurQ and PurL and is thought to assist in the transfer of the ammonia molecule from PurQ to PurL. The protein is Phosphoribosylformylglycinamidine synthase subunit PurQ of Campylobacter jejuni subsp. jejuni serotype O:2 (strain ATCC 700819 / NCTC 11168).